A 505-amino-acid chain; its full sequence is Acetylcholine receptor subunit beta (505 aa).

Positions 1–24 (MTPGALLLLLLGVLGAHLAPGARG) are cleaved as a signal peptide. Over 25–245 (SEAEGRLREK…VTFYLIIRRK (221 aa)) the chain is Extracellular. Cys-152 and Cys-166 are joined by a disulfide. A glycan (N-linked (GlcNAc...) asparagine) is linked at Asn-165. 3 helical membrane-spanning segments follow: residues 246–270 (PLFY…VFYL), 278–295 (MGLS…LLLL), and 312–333 (YLMF…VLNL). The Cytoplasmic portion of the chain corresponds to 334–473 (HHRSPHTHQM…WQFVAMVVDR (140 aa)). The disordered stretch occupies residues 365–391 (KPERDQMQEPPSIAPRDSPGSGWGRGT). Tyr-394 carries the phosphotyrosine; by Tyr-kinases modification. The chain crosses the membrane as a helical span at residues 474–492 (LFLWTFIIFTSVGTLVIFL).

It belongs to the ligand-gated ion channel (TC 1.A.9) family. Acetylcholine receptor (TC 1.A.9.1) subfamily. Beta-1/CHRNB1 sub-subfamily. In terms of assembly, pentamer of two alpha chains, and one each of the beta, delta, and gamma (in immature muscle) or epsilon (in mature muscle) chains. The muscle heteropentamer composed of alpha-1, beta-1, delta, epsilon subunits interacts with the alpha-conotoxin ImII.

It localises to the postsynaptic cell membrane. It is found in the cell membrane. It carries out the reaction K(+)(in) = K(+)(out). It catalyses the reaction Na(+)(in) = Na(+)(out). In terms of biological role, after binding acetylcholine, the AChR responds by an extensive change in conformation that affects all subunits and leads to opening of an ion-conducting channel across the plasma membrane. The chain is Acetylcholine receptor subunit beta (CHRNB1) from Bos taurus (Bovine).